The primary structure comprises 1046 residues: MASSVGNVADSTEPTKRMLSFQGLAELAHREYQAGDFEAAERHCMQLWRQEPDNTGVLLLLSSIHFQCRRLDRSAHFSTLAIKQNPLLAEAYSNLGNVYKERGQLQEAIEHYRHALRLKPDFIDGYINLAAALVAAGDMEGAVQAYVSALQYNPDLYCVRSDLGNLLKALGRLEEAKACYLKAIETQPNFAVAWSNLGCVFNAQGEIWLAIHHFEKAVTLDPNFLDAYINLGNVLKEARIFDRAVAAYLRALSLSPNHAVVHGNLACVYYEQGLIDLAIDTYRRAIELQPHFPDAYCNLANALKEKGSVAEAEDCYNTALRLCPTHADSLNNLANIKREQGNIEEAVRLYRKALEVFPEFAAAHSNLASVLQQQGKLQEALMHYKEAIRISPTFADAYSNMGNTLKEMQDVQGALQCYTRAIQINPAFADAHSNLASIHKDSGNIPEAIASYRTALKLKPDFPDAYCNLAHCLQIVCDWTDYDERMKKLVSIVADQLEKNRLPSVHPHHSMLYPLSHGFRKAIAERHGNLCLDKINVLHKPPYEHPKDLKLSDGRLRVGYVSSDFGNHPTSHLMQSIPGMHNPDKFEVFCYALSPDDGTNFRVKVMAEANHFIDLSQIPCNGKAADRIHQDGIHILVNMNGYTKGARNELFALRPAPIQAMWLGYPGTSGALFMDYIITDQETSPAEVAEQYSEKLAYMPHTFFIGDHANMFPHLKKKAVIDFKSNGHIYDNRIVLNGIDLKAFLDSLPDVKIVKMKCPDGGDNADSSNTALNMPVIPMNTIAEAVIEMINRGQIQITINGFSISNGLATTQINNKAATGEEVPRTIIVTTRSQYGLPEDAIVYCNFNQLYKIDPSTLQMWANILKRVPNSVLWLLRFPAVGEPNIQQYAQNMGLPQNRIIFSPVAPKEEHVRRGQLADVCLDTPLCNGHTTGMDVLWAGTPMVTMPGETLASRVAASQLTCLGCLELIAKNRQEFEDIAVKLGTDLEYLKKIRGKVWKQRISSPLFNTKQYTMELERLYLQMWEHYAAGNKPDHMIKPVEVTESA.

A2 carries the post-translational modification N-acetylalanine. Residues S3 and S4 each carry the phosphoserine; by GSK3-beta; alternate modification. 2 O-linked (GlcNAc) serine; alternate glycosylation sites follow: S3 and S4. Position 20 is a phosphoserine (S20). TPR repeat units lie at residues 21-54 (FQGL…EPDN), 89-122 (AEAY…KPDF), 123-156 (IDGY…NPDL), 157-190 (YCVR…QPNF), 191-224 (AVAW…DPNF), 225-258 (LDAY…SPNH), 259-292 (AVVH…QPHF), 293-326 (PDAY…CPTH), 327-360 (ADSL…FPEF), 361-394 (AAAH…SPTF), 395-428 (ADAY…NPAF), and 429-462 (ADAH…KPDF). S399 carries O-linked (GlcNAc) serine; by autocatalysis glycosylation. T454 carries the post-translational modification Phosphothreonine. One copy of the TPR 13; truncated repeat lies at 463–473 (PDAYCNLAHCL). The DFP motif signature appears at 464–466 (DAY). The Nuclear localization signal signature appears at 487 to 503 (KKLVSIVADQLEKNRLP). H508 functions as the Proton acceptor in the catalytic mechanism. Residues Q849, K852, 906 to 908 (APK), 911 to 914 (HVRR), 930 to 932 (HTT), and D935 each bind UDP. Y989 bears the Phosphotyrosine mark. The segment at 991 to 1010 (KKIRGKVWKQRISSPLFNTK) is required for phosphatidylinositol 3,4,5-triphosphate binding.

Belongs to the glycosyltransferase 41 family. O-GlcNAc transferase subfamily. Monomer; may exist in different oligomerization states in cells. Homotrimer, oligomerizes via TPR repeats 6 and 7. Trimerization is not necessary for activity in vitro, however it increases affinity for UDP-GlcNAc. Component of a THAP1/THAP3-HCFC1-OGT complex. Component of the NSL complex at least composed of MOF/KAT8, KANSL1, KANSL2, KANSL3, MCRS1, PHF20, OGT1/OGT, WDR5 and HCFC1. Found in a complex with KIF5B, RHOT1, RHOT2 and TRAK1. Found in a complex composed of at least SINHCAF, SIN3A, HDAC1, SAP30, RBBP4, OGT and TET1. Component of a complex composed of KMT2E/MLL5, OGT and USP7; the complex stabilizes KMT2E/MLL5, preventing KMT2E/MLL5 ubiquitination and proteasomal-mediated degradation. Interacts (via TPRs 1-6) with SIN3A; the interaction mediates transcriptional repression in parallel with histone deacetylase. Interacts (via TPR 5-6) with TET1, TET2 and TET3. Interacts (via TPR repeats 6 and 7) with ATXN10. Interacts with NSD2. Interacts with PROSER1; this interaction mediates TET2 O-GlcNAcylation and stability by promoting the interaction between OGT and TET2. Ubiquitinated by the SCF(FBXO31) complex, leading to its proteasomal degradation. In terms of processing, phosphorylation on Ser-3 or Ser-4 by GSK3-beta positively regulates its activity. Phosphorylation at Thr-454 by AMPK promotes nuclear localization. Post-translationally, glycosylated via autocatalysis; O-GlcNAcylation at Ser-399 promotes nuclear localization.

The protein resides in the nucleus. The protein localises to the cytoplasm. The catalysed reaction is L-seryl-[protein] + UDP-N-acetyl-alpha-D-glucosamine = 3-O-(N-acetyl-beta-D-glucosaminyl)-L-seryl-[protein] + UDP + H(+). The enzyme catalyses L-threonyl-[protein] + UDP-N-acetyl-alpha-D-glucosamine = 3-O-(N-acetyl-beta-D-glucosaminyl)-L-threonyl-[protein] + UDP + H(+). It functions in the pathway protein modification; protein glycosylation. Its activity is regulated as follows. Subject to product inhibition by UDP. Catalyzes the transfer of a single N-acetylglucosamine from UDP-GlcNAc to a serine or threonine residue in cytoplasmic and nuclear proteins resulting in their modification with a beta-linked N-acetylglucosamine (O-GlcNAc). Glycosylates a large and diverse number of proteins including histone H2B, AKT1, AMPK, ATG4B, CAPRIN1, EZH2, FNIP1, GSDMD, KRT7, LMNA, LMNB1, LMNB2, RPTOR, HOXA1, PFKL, KMT2E/MLL5, MAPT/TAU, TET2, RBL2, RET, NOD2 and HCFC1. Can regulate their cellular processes via cross-talk between glycosylation and phosphorylation or by affecting proteolytic processing. Involved in insulin resistance in muscle and adipocyte cells via glycosylating insulin signaling components and inhibiting the 'Thr-308' phosphorylation of AKT1, enhancing IRS1 phosphorylation and attenuating insulin signaling. Involved in glycolysis regulation by mediating glycosylation of 6-phosphofructokinase PFKL, inhibiting its activity. Plays a key role in chromatin structure by mediating O-GlcNAcylation of 'Ser-112' of histone H2B: recruited to CpG-rich transcription start sites of active genes via its interaction with TET proteins (TET1, TET2 or TET3). As part of the NSL complex indirectly involved in acetylation of nucleosomal histone H4 on several lysine residues. O-GlcNAcylation of 'Ser-75' of EZH2 increases its stability, and facilitating the formation of H3K27me3 by the PRC2/EED-EZH2 complex. Stabilizes KMT2E/MLL5 by mediating its glycosylation, thereby preventing KMT2E/MLL5 ubiquitination. Regulates circadian oscillation of the clock genes and glucose homeostasis in the liver. Stabilizes clock proteins BMAL1 and CLOCK through O-glycosylation, which prevents their ubiquitination and subsequent degradation. Promotes the CLOCK-BMAL1-mediated transcription of genes in the negative loop of the circadian clock such as PER1/2 and CRY1/2. O-glycosylates HCFC1 and regulates its proteolytic processing and transcriptional activity. Component of a THAP1/THAP3-HCFC1-OGT complex that is required for the regulation of the transcriptional activity of RRM1. Regulates mitochondrial motility in neurons by mediating glycosylation of TRAK1. Promotes autophagy by mediating O-glycosylation of ATG4B. Acts as a regulator of mTORC1 signaling by mediating O-glycosylation of RPTOR and FNIP1: O-GlcNAcylation of RPTOR in response to glucose sufficiency promotes activation of the mTORC1 complex. The polypeptide is UDP-N-acetylglucosamine--peptide N-acetylglucosaminyltransferase 110 kDa subunit (OGT) (Sus scrofa (Pig)).